The chain runs to 553 residues: uncharacterized protein (553 aa).

The N-terminal stretch at 1 to 31 is a signal peptide; the sequence is MEDIMTSLLVATSRVVVTISLAYVPVKSAFA. Catalysis depends on Ser207, which acts as the Acyl-ester intermediate. The cysteines at positions 275 and 292 are disulfide-linked. The Ca(2+) site is built by Asp276, Asp279, Val281, Asp283, and Leu285. Residues Asp444 and His482 each act as charge relay system in the active site. A disulfide bridge connects residues Cys528 and Cys550.

This sequence belongs to the tannase family.

This is an uncharacterized protein from Agrobacterium fabrum (strain C58 / ATCC 33970) (Agrobacterium tumefaciens (strain C58)).